Here is a 431-residue protein sequence, read N- to C-terminus: Glucose-1-phosphate adenylyltransferase (431 aa).

Lys-39 provides a ligand contact to beta-D-fructose 1,6-bisphosphate. 3 residues coordinate AMP: Arg-40, His-46, and Arg-52. Tyr-114 contacts alpha-D-glucose 1-phosphate. An AMP-binding site is contributed by Arg-130. Alpha-D-glucose 1-phosphate-binding positions include Gly-179, 194-195 (EK), and Ser-212. Glu-370 and Arg-386 together coordinate AMP. Beta-D-fructose 1,6-bisphosphate is bound by residues 419–423 (REMLR) and 429–431 (QER).

The protein belongs to the bacterial/plant glucose-1-phosphate adenylyltransferase family. Homotetramer.

The catalysed reaction is alpha-D-glucose 1-phosphate + ATP + H(+) = ADP-alpha-D-glucose + diphosphate. The protein operates within glycan biosynthesis; glycogen biosynthesis. Allosterically activated by fructose-1,6-bisphosphate (F16BP) and inhibited by AMP. Involved in the biosynthesis of ADP-glucose, a building block required for the elongation reactions to produce glycogen. Catalyzes the reaction between ATP and alpha-D-glucose 1-phosphate (G1P) to produce pyrophosphate and ADP-Glc. The protein is Glucose-1-phosphate adenylyltransferase of Escherichia coli O127:H6 (strain E2348/69 / EPEC).